The chain runs to 162 residues: UPF0114 protein PFLU_5318 (162 aa).

The next 3 helical transmembrane spans lie at 15 to 35 (LLAPIYFGLSLGLLALALKFF), 53 to 73 (LILVLLSLIDMALVGGLLVMV), and 136 to 156 (LMWYVIIHMTFVVSAFAMGYL).

The protein belongs to the UPF0114 family.

The protein localises to the cell membrane. The chain is UPF0114 protein PFLU_5318 from Pseudomonas fluorescens (strain SBW25).